A 137-amino-acid polypeptide reads, in one-letter code: Nucleoside diphosphate kinase (137 aa).

ATP contacts are provided by Lys-9, Phe-57, Arg-85, Thr-91, Arg-102, and Asn-112. His-115 serves as the catalytic Pros-phosphohistidine intermediate.

This sequence belongs to the NDK family. In terms of assembly, homotetramer. It depends on Mg(2+) as a cofactor.

The protein localises to the cytoplasm. The catalysed reaction is a 2'-deoxyribonucleoside 5'-diphosphate + ATP = a 2'-deoxyribonucleoside 5'-triphosphate + ADP. The enzyme catalyses a ribonucleoside 5'-diphosphate + ATP = a ribonucleoside 5'-triphosphate + ADP. In terms of biological role, major role in the synthesis of nucleoside triphosphates other than ATP. The ATP gamma phosphate is transferred to the NDP beta phosphate via a ping-pong mechanism, using a phosphorylated active-site intermediate. The chain is Nucleoside diphosphate kinase from Campylobacter curvus (strain 525.92).